Here is a 902-residue protein sequence, read N- to C-terminus: MSEFRIHHDVNELLSLLRVHGGDGAEVYIDLLQKNRTPYVTTTVSAHSAKVKIAEFSRTPEDFLKKYDELKSKNTRNLDPLVYLLSKLTEDKETLQYLQQNAKERAELAAAAVGSSTTSVNVPAAASKISMQELEELRKQLGSVATGSTLQQSLELKRKMLRDKQNKKNSDQHLPIFPAWVYERPALIGDFLIGAGISTDTALPIGTLPLASQESAVVEDLLYVLVGVDGRYVTAQPLAGRQSRTFLVDPNLDLSIRELVNRILPVAASYSTVTRFIEEKSSFEYGQVNHALAAAMRTLVKEHLILVSQLEQLHRQGLLSLQKLWFYIQPAMRTMDILASLATSVDKGECLGGSTLSLLHDRSFSYTGDSQAQELCLYLTKAASAPYFEVLEKWIYRGIIHDPYSEFMVEEHELRKERIQEDYNDKYWDQRYTIVQQQIPSFLQKMADKILSTGKYLNVVRECGHDVTCPVAKEIIYTLKERAYVEQIEKAFNYASKVLLDFLMEEKELVAHLRSIKRYFLMDQGDFFVHFMDLAEEELRKPVEDITPPRLEALLELALRMSTANTDPFKDDLKIDLMPHDLITQLLRVLAIETKQEKAMAHADPTELTLSGLEAFSFDYIVKWPLSLIINRKALTRYQMLFRHMFYCKHVERQLCSVWISNKTAKQHSLPSAQWFAGAFTLRQRMLNFVQNIQYYMMFEVMEPTWHILEKNLKSASNIDDVLGYHTGFLDTCLKDCMLTNPELLKVFSKLMSVCVMFTNCMQKFTQSMKLDGELGGQTLEHGTLPGLPAGAEDRARKELARKHLAEHADAAQLVSGFEATINKFDKNFSAHLLDLLARLSIYSTSDCEHGMASVTSRLDFNGFYTERLERLSAERSQKAAPQVPVLRGPPAPAPRVAVTAQ.

Y83 is modified (phosphotyrosine). The interval 875–902 is disordered; the sequence is ERSQKAAPQVPVLRGPPAPAPRVAVTAQ.

It belongs to the TUBGCP family. As to quaternary structure, component of the gamma-tubulin ring complex (gTuRC) consisting of TUBGCP2, TUBGCP3, TUBGCP4, TUBGCP5 and TUBGCP6 and gamma-tubulin TUBG1 or TUBG2. TUBGCP2, TUBGCP3, TUBGCP4, TUBGCP5 and TUBGCP6 assemble in a 5:5:2:1:1 stoichiometry; each is associated with a gamma-tubulin, thereby arranging 14 gamma-tubulins in a helical manner. Gamma-tubulin at the first position is blocked by TUBGCP3 at the last position, allowing 13 protafilaments to grow into a microtubule. The gTuRC (via TUBGCP3 and TUBGCP6) interacts with ACTB and MZT1; the interactions form a luminal bridge that stabilizes the initial structure during complex assembly. The gTuRC (via TUBGCP2) interacts with MZT2A/MZT2B and CDK5RAP2 (via CM1 motif); the interactions play a role in gTuRC activation. Interacts with ATF5; the ATF5:PCNT:polyglutamylated tubulin (PGT) tripartite unites the mother centriole and the pericentriolar material (PCM) in the centrosome.

The protein localises to the cytoplasm. The protein resides in the cytoskeleton. It localises to the microtubule organizing center. Its subcellular location is the centrosome. Functionally, component of the gamma-tubulin ring complex (gTuRC) which mediates microtubule nucleation. The gTuRC regulates the minus-end nucleation of alpha-beta tubulin heterodimers that grow into microtubule protafilaments, a critical step in centrosome duplication and spindle formation. Plays a role in neuronal migration. The polypeptide is Gamma-tubulin complex component 2 (TUBGCP2) (Pongo abelii (Sumatran orangutan)).